The primary structure comprises 518 residues: Probable cyclic di-GMP phosphodiesterase PdeN (518 aa).

A run of 2 helical transmembrane segments spans residues 16-36 and 236-256; these read CIVA…LVAW and VWYA…LCYY. One can recognise an EAL domain in the interval 261 to 514; the sequence is RMRPGREIMT…DFVRWLKKPY (254 aa).

It is found in the cell inner membrane. It carries out the reaction 3',3'-c-di-GMP + H2O = 5'-phosphoguanylyl(3'-&gt;5')guanosine + H(+). Phosphodiesterase (PDE) that catalyzes the hydrolysis of cyclic-di-GMP (c-di-GMP) to 5'-pGpG. The polypeptide is Probable cyclic di-GMP phosphodiesterase PdeN (Escherichia coli (strain K12)).